Reading from the N-terminus, the 164-residue chain is Cold-inducible RNA-binding protein (164 aa).

The 79-residue stretch at 6 to 84 (GKLFVGGLSF…RQIRVDQAGK (79 aa)) folds into the RRM domain. The tract at residues 65 to 164 (AGMNGKTVDG…SYRDSYDSYG (100 aa)) is disordered. Over residues 93–118 (YRGGSSGGGRGFFRGGRGRGGGGYGG) the composition is skewed to gly residues. Basic and acidic residues predominate over residues 155-164 (SYRDSYDSYG).

As to quaternary structure, interacts with prmt1. Interacts with elavl1/elrA (via RRM3). Associates with ribosomes. Post-translationally, methylated on arginine residues within RGG motifs. Methylation by prmt1 promotes cytoplasmic accumulation.

The protein resides in the nucleus. Its subcellular location is the nucleoplasm. The protein localises to the cytoplasm. In terms of biological role, cold-inducible mRNA binding protein. Acts cooperatively with elavl1/elrA to stabilize AU-rich element (ARE)-containing mRNAs by binding to them and inhibiting their deadenylation. Essential for embryonic gastrulation and neural development, acting to maintain the expression of a set of adhesion molecules, and cell movement during embryogenesis. Required for pronephros development. May play a role in hibernation. The sequence is that of Cold-inducible RNA-binding protein from Aquarana catesbeiana (American bullfrog).